We begin with the raw amino-acid sequence, 201 residues long: Small ribosomal subunit protein uS4 (201 aa).

Positions 91 to 157 constitute an S4 RNA-binding domain; sequence SRLDNVIYRA…VPFQIARETA (67 aa).

The protein belongs to the universal ribosomal protein uS4 family. As to quaternary structure, part of the 30S ribosomal subunit. Contacts protein S5. The interaction surface between S4 and S5 is involved in control of translational fidelity.

One of the primary rRNA binding proteins, it binds directly to 16S rRNA where it nucleates assembly of the body of the 30S subunit. In terms of biological role, with S5 and S12 plays an important role in translational accuracy. The polypeptide is Small ribosomal subunit protein uS4 (Mycobacterium tuberculosis (strain ATCC 25177 / H37Ra)).